The primary structure comprises 423 residues: UPF0229 protein Psyr_4632 (423 aa).

Positions 65–110 (HHGRGGKQTVVHPGNKEFTTGEHIARPQGGGGGKGPGKAGNSGEGM) are disordered. Residues 92-107 (QGGGGGKGPGKAGNSG) show a composition bias toward gly residues.

This sequence belongs to the UPF0229 family.

The sequence is that of UPF0229 protein Psyr_4632 from Pseudomonas syringae pv. syringae (strain B728a).